Consider the following 120-residue polypeptide: MADNIDLELSLQTNHSMIINKRLTQSDVDYNNRLHLPKREFEQFILPEMEWELVMNLRNSVEVIVKDVNGNEYHVTLVKYQNGHYYFMGKWMDIVRAKGYKRDDEISLLWDKSNEVFYII.

A DNA-binding region (TF-B3) is located at residues 19-120; sequence INKRLTQSDV…DKSNEVFYII (102 aa).

The protein localises to the nucleus. The protein is Putative B3 domain-containing protein At3g28853 of Arabidopsis thaliana (Mouse-ear cress).